The chain runs to 59 residues: Large ribosomal subunit protein uL30 (59 aa).

Belongs to the universal ribosomal protein uL30 family. As to quaternary structure, part of the 50S ribosomal subunit.

This chain is Large ribosomal subunit protein uL30, found in Alkaliphilus oremlandii (strain OhILAs) (Clostridium oremlandii (strain OhILAs)).